The primary structure comprises 426 residues: Histidine--tRNA ligase (426 aa).

This sequence belongs to the class-II aminoacyl-tRNA synthetase family. As to quaternary structure, homodimer.

The protein localises to the cytoplasm. It catalyses the reaction tRNA(His) + L-histidine + ATP = L-histidyl-tRNA(His) + AMP + diphosphate + H(+). In Geobacillus kaustophilus (strain HTA426), this protein is Histidine--tRNA ligase.